A 449-amino-acid chain; its full sequence is L10-interacting MYB domain-containing protein (449 aa).

A Myb-like domain is found at 162–225; that stretch reads SNPQTKGYWS…YTRPQLKNHW (64 aa). Positions 297–324 are disordered; the sequence is TYTPPSRSRKKLLHNRSESPQWRDTTPL. Residues 314 to 324 are compositionally biased toward polar residues; the sequence is ESPQWRDTTPL.

Interacts with RPL10A. Expressed in seedlings, leaves, roots, stems and flowers.

The protein resides in the nucleus. Functionally, transcriptional repressor that associates with ribosomal protein promoters. This is L10-interacting MYB domain-containing protein from Arabidopsis thaliana (Mouse-ear cress).